A 113-amino-acid chain; its full sequence is Putative membrane protein insertion efficiency factor (113 aa).

This sequence belongs to the UPF0161 family.

It is found in the cell inner membrane. In terms of biological role, could be involved in insertion of integral membrane proteins into the membrane. This is Putative membrane protein insertion efficiency factor from Campylobacter concisus (strain 13826).